The primary structure comprises 603 residues: Protein US26 (603 aa).

A compositionally biased stretch (acidic residues) spans 496 to 513 (EEEDQEEDDTSDDDDQEK). Disordered stretches follow at residues 496 to 536 (EEED…GSLE) and 549 to 568 (AVAEQDRKKTQKKHKIDTAQ). Positions 517-533 (NPQNNIGSLTRTPSSPG) are enriched in polar residues.

Belongs to the herpesviridae US22 family.

In Human cytomegalovirus (strain Merlin) (HHV-5), this protein is Protein US26 (US26).